Here is a 400-residue protein sequence, read N- to C-terminus: Cytoplasmic tRNA 2-thiolation protein 2 (400 aa).

This sequence belongs to the CTU2/NCS2 family.

The protein localises to the cytoplasm. Its pathway is tRNA modification; 5-methoxycarbonylmethyl-2-thiouridine-tRNA biosynthesis. Functionally, plays a central role in 2-thiolation of mcm(5)S(2)U at tRNA wobble positions of tRNA(Lys), tRNA(Glu) and tRNA(Gln). May act by forming a heterodimer with NCS6/CTU1 that ligates sulfur from thiocarboxylated URM1 onto the uridine of tRNAs at wobble position. The chain is Cytoplasmic tRNA 2-thiolation protein 2 from Drosophila virilis (Fruit fly).